The chain runs to 233 residues: Cysteine-rich venom protein (233 aa).

A signal peptide spans 1-12 (PILAAVLQQSSG). The region spanning 31-159 (VDLHNSLRRS…PYSYFFVCQY (129 aa)) is the SCP domain. 8 disulfide bridges follow: cysteine 68/cysteine 146, cysteine 85/cysteine 160, cysteine 141/cysteine 157, cysteine 179/cysteine 186, cysteine 182/cysteine 191, cysteine 195/cysteine 228, cysteine 204/cysteine 222, and cysteine 213/cysteine 226. One can recognise a ShKT domain in the interval 195-228 (CTRENKFTNCNTMVQQSSCQDNYMKTNCPASCFC).

This sequence belongs to the CRISP family. As to expression, expressed by the venom gland.

It is found in the secreted. In terms of biological role, blocks contraction of smooth muscle elicited by high potassium-induced depolarization, but does not block caffeine-stimulated contraction. May target voltage-gated calcium channels on smooth muscle. In Trimeresurus stejnegeri (Chinese green tree viper), this protein is Cysteine-rich venom protein.